Here is a 442-residue protein sequence, read N- to C-terminus: Large ribosomal subunit protein mL65 (442 aa).

Belongs to the mitochondrion-specific ribosomal protein mL65 family. Component of the mitochondrial ribosome small subunit (28S) which comprises a 12S rRNA and about 30 distinct proteins.

It localises to the mitochondrion. This chain is Large ribosomal subunit protein mL65 (Mrps30), found in Mus musculus (Mouse).